Consider the following 386-residue polypeptide: Myosin light chain kinase family member 4 (386 aa).

Serine 100 is modified (phosphoserine). The region spanning 107–361 (VSKSEILGGG…ASEALKHPWL (255 aa)) is the Protein kinase domain. ATP contacts are provided by residues 113-121 (LGGGRFGQV) and lysine 136. The active-site Proton acceptor is the aspartate 227.

This sequence belongs to the protein kinase superfamily. CAMK Ser/Thr protein kinase family.

It catalyses the reaction L-seryl-[protein] + ATP = O-phospho-L-seryl-[protein] + ADP + H(+). It carries out the reaction L-threonyl-[protein] + ATP = O-phospho-L-threonyl-[protein] + ADP + H(+). The sequence is that of Myosin light chain kinase family member 4 (Mylk4) from Mus musculus (Mouse).